We begin with the raw amino-acid sequence, 376 residues long: Dihydroorotate dehydrogenase (quinone) (376 aa).

FMN contacts are provided by residues A78 to K82 and T102. K82 contributes to the substrate binding site. Residue N127 to F131 participates in substrate binding. FMN contacts are provided by N157 and N190. N190 is a binding site for substrate. The active-site Nucleophile is S193. N195 is a substrate binding site. FMN is bound by residues K228 and T256. Substrate is bound at residue N257–T258. FMN contacts are provided by residues G286, G315, and Y336–T337.

It belongs to the dihydroorotate dehydrogenase family. Type 2 subfamily. In terms of assembly, monomer. Requires FMN as cofactor.

It localises to the cell membrane. It catalyses the reaction (S)-dihydroorotate + a quinone = orotate + a quinol. The protein operates within pyrimidine metabolism; UMP biosynthesis via de novo pathway; orotate from (S)-dihydroorotate (quinone route): step 1/1. Its function is as follows. Catalyzes the conversion of dihydroorotate to orotate with quinone as electron acceptor. The chain is Dihydroorotate dehydrogenase (quinone) from Nostoc sp. (strain PCC 7120 / SAG 25.82 / UTEX 2576).